Consider the following 313-residue polypeptide: Spermatid maturation protein 1 (313 aa).

The chain crosses the membrane as a helical span at residues 29-49 (ILLLLGLIICINIGINMVTLL). 4 disordered regions span residues 71-90 (KLRSPGKQTQPSKHSSPAVH), 97-151 (AVKM…HNWD), 243-263 (EPPILGPANVPDIPRRRSSGR), and 291-313 (LASGSSTAEGTRKDWVYRSMTER). The span at 76 to 85 (GKQTQPSKHS) shows a compositional bias: polar residues. The span at 107-122 (TRRRHRRGSSSRRARR) shows a compositional bias: basic residues. Residues 263–289 (RVTYDARDVRRRLRELTREVEALSHCY) are a coiled coil. Residues 300–313 (GTRKDWVYRSMTER) are compositionally biased toward basic and acidic residues.

The protein localises to the membrane. It is found in the cytoplasm. Required for proper cytoplasm removal during spermatogenesis. The polypeptide is Spermatid maturation protein 1 (SPEM1) (Bos taurus (Bovine)).